A 183-amino-acid polypeptide reads, in one-letter code: Small ribosomal subunit protein uS4c (183 aa).

Residues 82–143 (MRLDNILFRL…KQRSKALIQN (62 aa)) enclose the S4 RNA-binding domain.

This sequence belongs to the universal ribosomal protein uS4 family. In terms of assembly, part of the 30S ribosomal subunit. Contacts protein S5. The interaction surface between S4 and S5 is involved in control of translational fidelity.

The protein localises to the plastid. It localises to the chloroplast. One of the primary rRNA binding proteins, it binds directly to 16S rRNA where it nucleates assembly of the body of the 30S subunit. In terms of biological role, with S5 and S12 plays an important role in translational accuracy. This chain is Small ribosomal subunit protein uS4c (rps4), found in Crocosmia sp. (strain Porto Alegre 034).